The following is a 149-amino-acid chain: Nucleoside diphosphate kinase (149 aa).

Positions 9, 57, 85, 91, 102, and 112 each coordinate ATP. His-115 functions as the Pros-phosphohistidine intermediate in the catalytic mechanism.

Belongs to the NDK family. In terms of assembly, homotetramer. Requires Mg(2+) as cofactor.

It localises to the cytoplasm. The enzyme catalyses a 2'-deoxyribonucleoside 5'-diphosphate + ATP = a 2'-deoxyribonucleoside 5'-triphosphate + ADP. It carries out the reaction a ribonucleoside 5'-diphosphate + ATP = a ribonucleoside 5'-triphosphate + ADP. Its function is as follows. Major role in the synthesis of nucleoside triphosphates other than ATP. The ATP gamma phosphate is transferred to the NDP beta phosphate via a ping-pong mechanism, using a phosphorylated active-site intermediate. The polypeptide is Nucleoside diphosphate kinase (Roseiflexus sp. (strain RS-1)).